Consider the following 278-residue polypeptide: Tryptophan synthase alpha chain (278 aa).

Residues E50 and D61 each act as proton acceptor in the active site.

It belongs to the TrpA family. As to quaternary structure, tetramer of two alpha and two beta chains.

The enzyme catalyses (1S,2R)-1-C-(indol-3-yl)glycerol 3-phosphate + L-serine = D-glyceraldehyde 3-phosphate + L-tryptophan + H2O. It functions in the pathway amino-acid biosynthesis; L-tryptophan biosynthesis; L-tryptophan from chorismate: step 5/5. Its function is as follows. The alpha subunit is responsible for the aldol cleavage of indoleglycerol phosphate to indole and glyceraldehyde 3-phosphate. This is Tryptophan synthase alpha chain from Afipia carboxidovorans (strain ATCC 49405 / DSM 1227 / KCTC 32145 / OM5) (Oligotropha carboxidovorans).